Here is a 545-residue protein sequence, read N- to C-terminus: CTP synthase (545 aa).

The segment at 1 to 266 is amidoligase domain; the sequence is MTTNYIFVTG…DDYICKRFSL (266 aa). CTP is bound at residue serine 14. Serine 14 is a binding site for UTP. ATP is bound by residues 15–20 and aspartate 72; that span reads SLGKGI. Residues aspartate 72 and glutamate 140 each contribute to the Mg(2+) site. Residues 147 to 149, 187 to 192, and lysine 223 contribute to the CTP site; these read DIE and KTKPTQ. UTP contacts are provided by residues 187 to 192 and lysine 223; that span reads KTKPTQ. Residue 239-241 participates in ATP binding; sequence KDV. A Glutamine amidotransferase type-1 domain is found at 291–542; that stretch reads TIGMVGKYIE…VKAANEHQKR (252 aa). L-glutamine is bound at residue glycine 352. Cysteine 379 (nucleophile; for glutamine hydrolysis) is an active-site residue. L-glutamine is bound by residues 380–383, glutamate 403, and arginine 470; that span reads LGMQ. Residues histidine 515 and glutamate 517 contribute to the active site.

The protein belongs to the CTP synthase family. In terms of assembly, homotetramer.

The enzyme catalyses UTP + L-glutamine + ATP + H2O = CTP + L-glutamate + ADP + phosphate + 2 H(+). The catalysed reaction is L-glutamine + H2O = L-glutamate + NH4(+). It carries out the reaction UTP + NH4(+) + ATP = CTP + ADP + phosphate + 2 H(+). Its pathway is pyrimidine metabolism; CTP biosynthesis via de novo pathway; CTP from UDP: step 2/2. With respect to regulation, allosterically activated by GTP, when glutamine is the substrate; GTP has no effect on the reaction when ammonia is the substrate. The allosteric effector GTP functions by stabilizing the protein conformation that binds the tetrahedral intermediate(s) formed during glutamine hydrolysis. Inhibited by the product CTP, via allosteric rather than competitive inhibition. Functionally, catalyzes the ATP-dependent amination of UTP to CTP with either L-glutamine or ammonia as the source of nitrogen. Regulates intracellular CTP levels through interactions with the four ribonucleotide triphosphates. The sequence is that of CTP synthase from Salmonella paratyphi A (strain ATCC 9150 / SARB42).